Reading from the N-terminus, the 53-residue chain is UPF0391 membrane protein ESA_03375 (53 aa).

Transmembrane regions (helical) follow at residues 4–24 (WGII…GGLA) and 28–48 (AGAA…SLFM).

It belongs to the UPF0391 family.

The protein localises to the cell membrane. This Cronobacter sakazakii (strain ATCC BAA-894) (Enterobacter sakazakii) protein is UPF0391 membrane protein ESA_03375.